A 283-amino-acid polypeptide reads, in one-letter code: Putative 4-diphosphocytidyl-2-C-methyl-D-erythritol kinase (283 aa).

Lys11 is a catalytic residue. 95-105 (PVCAGMGGGSS) lines the ATP pocket. Residue Asp137 is part of the active site.

It belongs to the GHMP kinase family. IspE subfamily.

The catalysed reaction is 4-CDP-2-C-methyl-D-erythritol + ATP = 4-CDP-2-C-methyl-D-erythritol 2-phosphate + ADP + H(+). Catalyzes the phosphorylation of the position 2 hydroxy group of 4-diphosphocytidyl-2C-methyl-D-erythritol. This Streptococcus equi subsp. equi (strain 4047) protein is Putative 4-diphosphocytidyl-2-C-methyl-D-erythritol kinase.